A 536-amino-acid chain; its full sequence is Phosphoenolpyruvate carboxykinase (ATP) (536 aa).

3 residues coordinate substrate: arginine 61, tyrosine 195, and lysine 201. ATP contacts are provided by residues lysine 201, histidine 220, and 236–244 (GLSGTGKTT). 2 residues coordinate Mn(2+): lysine 201 and histidine 220. Residue aspartate 257 participates in Mn(2+) binding. Glutamate 285, arginine 322, and threonine 447 together coordinate ATP. Arginine 322 provides a ligand contact to substrate.

This sequence belongs to the phosphoenolpyruvate carboxykinase (ATP) family. Requires Mn(2+) as cofactor.

The protein localises to the cytoplasm. The enzyme catalyses oxaloacetate + ATP = phosphoenolpyruvate + ADP + CO2. It functions in the pathway carbohydrate biosynthesis; gluconeogenesis. In terms of biological role, involved in the gluconeogenesis. Catalyzes the conversion of oxaloacetate (OAA) to phosphoenolpyruvate (PEP) through direct phosphoryl transfer between the nucleoside triphosphate and OAA. In Sinorhizobium fredii (strain NBRC 101917 / NGR234), this protein is Phosphoenolpyruvate carboxykinase (ATP).